The primary structure comprises 753 residues: 5-methyltetrahydropteroyltriglutamate--homocysteine methyltransferase (753 aa).

Residues 17–20 and K117 each bind 5-methyltetrahydropteroyltri-L-glutamate; that span reads RELK. Residues 431 to 433 and E484 each bind L-homocysteine; that span reads IGS. L-methionine is bound by residues 431 to 433 and E484; that span reads IGS. 5-methyltetrahydropteroyltri-L-glutamate-binding positions include 515-516 and W561; that span reads RC. An L-homocysteine-binding site is contributed by D599. L-methionine is bound at residue D599. E605 serves as a coordination point for 5-methyltetrahydropteroyltri-L-glutamate. Zn(2+) is bound by residues H641, C643, and E665. The active-site Proton donor is H694. Residue C726 participates in Zn(2+) binding.

The protein belongs to the vitamin-B12 independent methionine synthase family. The cofactor is Zn(2+).

The enzyme catalyses 5-methyltetrahydropteroyltri-L-glutamate + L-homocysteine = tetrahydropteroyltri-L-glutamate + L-methionine. It functions in the pathway amino-acid biosynthesis; L-methionine biosynthesis via de novo pathway; L-methionine from L-homocysteine (MetE route): step 1/1. Catalyzes the transfer of a methyl group from 5-methyltetrahydrofolate to homocysteine resulting in methionine formation. The sequence is that of 5-methyltetrahydropteroyltriglutamate--homocysteine methyltransferase from Escherichia coli O157:H7 (strain EC4115 / EHEC).